The chain runs to 156 residues: Putative pre-16S rRNA nuclease (156 aa).

It belongs to the YqgF nuclease family.

The protein localises to the cytoplasm. Functionally, could be a nuclease involved in processing of the 5'-end of pre-16S rRNA. This Ehrlichia chaffeensis (strain ATCC CRL-10679 / Arkansas) protein is Putative pre-16S rRNA nuclease.